Here is a 322-residue protein sequence, read N- to C-terminus: MMQNNPFPYSNTEKRYHTLNYHLREHFGHKVFKVALDGGFDCPNRDGTVAHGGCTFCSAAGSGDFAGNRTDDLITQFHDIKNRMHEKWKDGKYIAYFQAFTNTHAPVEVLREKFESVLALDDVVGISIATRPDCLPDDVVDYLAELNERTYLWVELGLQTVHERTALLINRAHDFNCYVEGVNKLRKHGIRVCSHIINGLPLEDRDMMMETAKAVADLDVQGIKIHLLHLLKGTPMVKQYEKGKLEFLSQDDYVQLVCDQLEIIPPEMIVHRITGDGPIELMIGPMWSVNKWEVLGAINKELENRGSYQGKFFQRLEEESAL.

A Radical SAM core domain is found at 26-267 (HFGHKVFKVA…CDQLEIIPPE (242 aa)). Residues Cys42, Cys54, and Cys57 each coordinate [4Fe-4S] cluster.

The protein belongs to the radical SAM superfamily. [4Fe-4S] cluster is required as a cofactor.

This is an uncharacterized protein from Bacillus subtilis (strain 168).